The chain runs to 202 residues: Small ribosomal subunit protein uS4 (202 aa).

In terms of domain architecture, S4 RNA-binding spans 91 to 168 (SRLSSVLYNS…QKVPDYLEVD (78 aa)).

The protein belongs to the universal ribosomal protein uS4 family. In terms of assembly, part of the 30S ribosomal subunit. Contacts protein S5. The interaction surface between S4 and S5 is involved in control of translational fidelity.

In terms of biological role, one of the primary rRNA binding proteins, it binds directly to 16S rRNA where it nucleates assembly of the body of the 30S subunit. With S5 and S12 plays an important role in translational accuracy. This chain is Small ribosomal subunit protein uS4, found in Ehrlichia chaffeensis (strain ATCC CRL-10679 / Arkansas).